Here is a 166-residue protein sequence, read N- to C-terminus: KH homology domain-containing protein 1A (166 aa).

The KH; atypical domain maps to P19–M78.

Belongs to the KHDC1 family.

It localises to the cytoplasm. In terms of biological role, has pro-apoptotic activity. The sequence is that of KH homology domain-containing protein 1A (Khdc1a) from Mus musculus (Mouse).